We begin with the raw amino-acid sequence, 599 residues long: NADH-quinone oxidoreductase subunit C/D (599 aa).

A compositionally biased stretch (polar residues) spans 1–15; that stretch reads MTDLTAQELAQPSWQ. The tract at residues 1–21 is disordered; that stretch reads MTDLTAQELAQPSWQTRDHQD. The NADH dehydrogenase I subunit C stretch occupies residues 1–189; the sequence is MTDLTAQELA…DPFELTKQKE (189 aa). The tract at residues 213 to 599 is NADH dehydrogenase I subunit D; it reads DFMFLNLGPN…IDFVMSDVDR (387 aa).

In the N-terminal section; belongs to the complex I 30 kDa subunit family. It in the C-terminal section; belongs to the complex I 49 kDa subunit family. As to quaternary structure, NDH-1 is composed of 13 different subunits. Subunits NuoB, CD, E, F, and G constitute the peripheral sector of the complex.

It is found in the cell inner membrane. It catalyses the reaction a quinone + NADH + 5 H(+)(in) = a quinol + NAD(+) + 4 H(+)(out). Its function is as follows. NDH-1 shuttles electrons from NADH, via FMN and iron-sulfur (Fe-S) centers, to quinones in the respiratory chain. The immediate electron acceptor for the enzyme in this species is believed to be ubiquinone. Couples the redox reaction to proton translocation (for every two electrons transferred, four hydrogen ions are translocated across the cytoplasmic membrane), and thus conserves the redox energy in a proton gradient. The polypeptide is NADH-quinone oxidoreductase subunit C/D (Erwinia tasmaniensis (strain DSM 17950 / CFBP 7177 / CIP 109463 / NCPPB 4357 / Et1/99)).